Here is a 371-residue protein sequence, read N- to C-terminus: Palmitoyl-monogalactosyldiacylglycerol delta-7 desaturase, chloroplastic (371 aa).

A chloroplast-targeting transit peptide spans 1 to 67 (MASLLTKPKP…KGLKRDVTTA (67 aa)). 2 consecutive transmembrane segments (helical) span residues 103-123 (FGAVAVVLSMHLLSLLAPFQF) and 127-147 (AVSVAFGLYIVTGLLGITLSF). The Histidine box-1 signature appears at 148–153 (HRNLSH). A Histidine box-2 motif is present at residues 185–189 (HRYHH). A helical transmembrane segment spans residues 251-271 (ALAVALYAMGGFPFIVWGMGV). A Histidine box-3 motif is present at residues 317 to 321 (HNNHH).

This sequence belongs to the fatty acid desaturase type 1 family. Fe(2+) is required as a cofactor. Highly expressed in young leaves. Low expression in roots.

It is found in the plastid. The protein resides in the chloroplast membrane. The catalysed reaction is a 1-acyl-2-hexadecanoyl-glycerolipid + 2 reduced [2Fe-2S]-[ferredoxin] + O2 + 2 H(+) = a 1-acyl-2-[(7Z)-hexadecenoyl]-glycerolipid + 2 oxidized [2Fe-2S]-[ferredoxin] + 2 H2O. Its pathway is lipid metabolism; oxylipin biosynthesis. It functions in the pathway lipid metabolism; polyunsaturated fatty acid biosynthesis. Its function is as follows. Fatty acid desaturase involved in the first desaturation step leading to the formation of hexadeca 7,10,13-trienoic acid (16:3(7Z,10Z,13Z)), the major functional components of thylakoid membranes. Required for chloroplast biogenesis at low temperature. Also indirectly involved in the production of the oxylipin dinor-oxo-phyto-dienoic acid implicated in wound signaling. The protein is Palmitoyl-monogalactosyldiacylglycerol delta-7 desaturase, chloroplastic of Arabidopsis thaliana (Mouse-ear cress).